Reading from the N-terminus, the 420-residue chain is D-tagatose-1,6-bisphosphate aldolase subunit GatZ (420 aa).

Belongs to the GatZ/KbaZ family. GatZ subfamily. Forms a complex with GatY.

Its pathway is carbohydrate metabolism; D-tagatose 6-phosphate degradation; D-glyceraldehyde 3-phosphate and glycerone phosphate from D-tagatose 6-phosphate: step 2/2. In terms of biological role, component of the tagatose-1,6-bisphosphate aldolase GatYZ that is required for full activity and stability of the Y subunit. Could have a chaperone-like function for the proper and stable folding of GatY. When expressed alone, GatZ does not show any aldolase activity. Is involved in the catabolism of galactitol. The chain is D-tagatose-1,6-bisphosphate aldolase subunit GatZ from Shigella flexneri serotype 5b (strain 8401).